Consider the following 812-residue polypeptide: Fibroblast growth factor receptor 1 (812 aa).

The first 20 residues, 1 to 20, serve as a signal peptide directing secretion; the sequence is MFSGMSLLLWGVLLGAALSV. The Extracellular portion of the chain corresponds to 21 to 371; the sequence is ARPPSTLPDE…PALLASPLQL (351 aa). The Ig-like C2-type 1 domain maps to 25–118; it reads STLPDEVAPK…YTVLCSVNVS (94 aa). Residues Cys54 and Cys100 are joined by a disulfide bond. N-linked (GlcNAc...) asparagine glycosylation is found at Asn76, Asn116, Asn133, Asn223, Asn236, Asn260, Asn292, Asn313, and Asn326. The disordered stretch occupies residues 121–153; that stretch reads LPSAEDDDEDDDNSSSEEKAAENSKPNRPLWSH. Acidic residues predominate over residues 124–135; it reads AEDDDEDDDNSS. Ig-like C2-type domains follow at residues 154–242 and 251–353; these read PEKM…YQLD and PILQ…AWLT. A disulfide bond links Cys174 and Cys226. Cys273 and Cys337 are disulfide-bonded. The helical transmembrane segment at 372–393 threads the bilayer; it reads EIIIYCTGAAFVSAMVVTIIIF. Residues 394–812 lie on the Cytoplasmic side of the membrane; it reads KMKHPSKKSD…KYSNGGLKKR (419 aa). Tyr457 carries the phosphotyrosine; by autocatalysis modification. The region spanning 472-761 is the Protein kinase domain; sequence LILGKPLGEG…LALSSNQEYL (290 aa). Residues 478–484, Lys508, 556–558, and Asn562 contribute to the ATP site; these read LGEGCFG and EYT. Phosphotyrosine; by autocatalysis is present on residues Tyr577 and Tyr579. Residue Asp617 is the Proton acceptor of the active site. 2 residues coordinate ATP: Arg621 and Asp635. Phosphotyrosine; by autocatalysis occurs at positions 647, 648, 724, and 760. Residues 784–812 form a disordered region; the sequence is SGEDSMFSHDPLPDEPCLPKYSNGGLKKR.

It belongs to the protein kinase superfamily. Tyr protein kinase family. Fibroblast growth factor receptor subfamily. Monomer. Homodimer after ligand binding. Interacts with il17rd. In terms of processing, autophosphorylated. Binding of FGF family members together with heparan sulfate proteoglycan or heparin promotes receptor dimerization and autophosphorylation on tyrosine residues. Autophosphorylation occurs in trans between the two FGFR molecules present in the dimer and proceeds in a highly ordered manner. Phosphotyrosine residues provide docking sites for interacting proteins and so are crucial for FGFR1 function and its regulation. Post-translationally, ubiquitinated. FGFR1 is rapidly ubiquitinated after autophosphorylation, leading to internalization and degradation. N-glycosylated in the endoplasmic reticulum. The N-glycan chains undergo further maturation to an Endo H-resistant form in the Golgi apparatus.

It localises to the cell membrane. The protein localises to the nucleus. Its subcellular location is the cytoplasm. It is found in the cytosol. The protein resides in the cytoplasmic vesicle. It catalyses the reaction L-tyrosyl-[protein] + ATP = O-phospho-L-tyrosyl-[protein] + ADP + H(+). Present in an inactive conformation in the absence of bound ligand. Ligand binding leads to dimerization and activation by sequential autophosphorylation on tyrosine residues. In terms of biological role, tyrosine-protein kinase that acts as a cell-surface receptor for fibroblast growth factors and plays an essential role in the regulation of embryonic development, cell proliferation, differentiation and migration. Required for normal mesoderm patterning and normal skeletogenesis. Phosphorylates PLCG1, FRS2, GAB1 and SHB. Ligand binding leads to the activation of several signaling cascades. Activation of PLCG1 leads to the production of the cellular signaling molecules diacylglycerol and inositol-1,4,5-trisphosphate. Phosphorylation of FRS2 triggers recruitment of GRB2, GAB1, PIK3R1 and SOS1, and mediates activation of RAS, MAPK1/ERK2, MAPK3/ERK1 and the MAP kinase signaling pathway, as well as of the AKT1 signaling pathway. Promotes phosphorylation of SHC1, STAT1 and PTPN11/SHP2. In the nucleus, enhances RPS6KA1 and CREB1 activity and contributes to the regulation of transcription. FGFR1 signaling is down-regulated by ubiquitination, internalization and degradation. The polypeptide is Fibroblast growth factor receptor 1 (fgfr1) (Xenopus laevis (African clawed frog)).